Consider the following 516-residue polypeptide: 1-pyrroline-5-carboxylate dehydrogenase (516 aa).

Active-site residues include E287 and C321.

This sequence belongs to the aldehyde dehydrogenase family. RocA subfamily.

It carries out the reaction L-glutamate 5-semialdehyde + NAD(+) + H2O = L-glutamate + NADH + 2 H(+). It participates in amino-acid degradation; L-proline degradation into L-glutamate; L-glutamate from L-proline: step 2/2. The chain is 1-pyrroline-5-carboxylate dehydrogenase from Bacillus licheniformis (strain ATCC 14580 / DSM 13 / JCM 2505 / CCUG 7422 / NBRC 12200 / NCIMB 9375 / NCTC 10341 / NRRL NRS-1264 / Gibson 46).